Here is a 240-residue protein sequence, read N- to C-terminus: Mitochondrial transcription rescue factor 1 (240 aa).

A mitochondrion-targeting transit peptide spans 1–83 (MAVPGVRLLT…ECYFPFSIRL (83 aa)). The segment at 92-127 (STKKTLQKEADEEDSDEETSYPERSEQEEELESEPG) is disordered. Over residues 101-124 (ADEEDSDEETSYPERSEQEEELES) the composition is skewed to acidic residues. S106 and S116 each carry phosphoserine. The 76-residue stretch at 142–217 (FRYDVILKTG…LKKVYEEKTE (76 aa)) folds into the S4 RNA-binding domain.

In terms of assembly, monomer. Interacts with POLRMT. Interacts (via S4 domain) with MTRFR (via C-terminus). Associates with mitoribosomal S39 large subunit, peptidyl tRNA and nascent chain.

It is found in the mitochondrion matrix. Mitochondrial RNA-binding protein involved in mitochondrial transcription regulation. Functions as a protective factor to maintain proper mitochondrial RNA level during stress. Acts at the transcription level and its protective function depends on its RNA binding ability. Part of a mitoribosome-associated quality control pathway that prevents aberrant translation by responding to interruptions during elongation. As heterodimer with MTRF, ejects the unfinished nascent chain and peptidyl transfer RNA (tRNA), respectively, from stalled ribosomes. Recruitment of mitoribosome biogenesis factors to these quality control intermediates suggests additional roles for MTRES1 and MTRF during mitoribosome rescue. The polypeptide is Mitochondrial transcription rescue factor 1 (Mtres1) (Mus musculus (Mouse)).